The chain runs to 641 residues: UvrABC system protein C (641 aa).

One can recognise a GIY-YIG domain in the interval 16-95 (ESPGVYRFWD…IKQYEPRFNI (80 aa)). The region spanning 208–243 (TEYLRRLEKDMRAAAAAEDFERAARLRDDAAALRLA) is the UVR domain.

Belongs to the UvrC family. As to quaternary structure, interacts with UvrB in an incision complex.

It localises to the cytoplasm. In terms of biological role, the UvrABC repair system catalyzes the recognition and processing of DNA lesions. UvrC both incises the 5' and 3' sides of the lesion. The N-terminal half is responsible for the 3' incision and the C-terminal half is responsible for the 5' incision. This chain is UvrABC system protein C, found in Acidothermus cellulolyticus (strain ATCC 43068 / DSM 8971 / 11B).